Here is a 241-residue protein sequence, read N- to C-terminus: Probable transcriptional regulatory protein H16_A0916 (241 aa).

This sequence belongs to the TACO1 family.

It localises to the cytoplasm. This chain is Probable transcriptional regulatory protein H16_A0916, found in Cupriavidus necator (strain ATCC 17699 / DSM 428 / KCTC 22496 / NCIMB 10442 / H16 / Stanier 337) (Ralstonia eutropha).